The following is a 464-amino-acid chain: Fumarate hydratase class II (464 aa).

Residues 98–100 (SGT), 129–132 (HPND), 139–141 (SSN), and T187 each bind substrate. Residue H188 is the Proton donor/acceptor of the active site. The active site involves S318. Residues S319 and 324–326 (KVN) contribute to the substrate site.

It belongs to the class-II fumarase/aspartase family. Fumarase subfamily. As to quaternary structure, homotetramer.

It localises to the cytoplasm. It carries out the reaction (S)-malate = fumarate + H2O. It functions in the pathway carbohydrate metabolism; tricarboxylic acid cycle; (S)-malate from fumarate: step 1/1. Involved in the TCA cycle. Catalyzes the stereospecific interconversion of fumarate to L-malate. The chain is Fumarate hydratase class II from Haemophilus influenzae (strain ATCC 51907 / DSM 11121 / KW20 / Rd).